Here is a 91-residue protein sequence, read N- to C-terminus: Small ribosomal subunit protein uS17 (91 aa).

It belongs to the universal ribosomal protein uS17 family. Part of the 30S ribosomal subunit.

Its function is as follows. One of the primary rRNA binding proteins, it binds specifically to the 5'-end of 16S ribosomal RNA. The polypeptide is Small ribosomal subunit protein uS17 (Saccharopolyspora erythraea (strain ATCC 11635 / DSM 40517 / JCM 4748 / NBRC 13426 / NCIMB 8594 / NRRL 2338)).